Consider the following 142-residue polypeptide: Midkine-B (142 aa).

The signal sequence occupies residues 1-20 (MELRAFCVILLITILAVSSQ). 5 disulfide bridges follow: Cys-36–Cys-60, Cys-44–Cys-69, Cys-51–Cys-73, Cys-83–Cys-115, and Cys-93–Cys-125.

This sequence belongs to the pleiotrophin family. In adults, expression is highest in the brain, eye and bone, with lower expression in the heart and lung. Not expressed in the ovary. In the tailbud stage embryo, expressed in the head and tail regions as well as in the central nervous system (CNS).

Its subcellular location is the secreted. Functionally, secreted protein that functions as a cytokine and growth factor and mediates its signal through cell-surface proteoglycan and non-proteoglycan receptors. Binds cell-surface proteoglycan receptors via their chondroitin sulfate (CS) groups. Thereby regulates many processes like inflammatory response, cell proliferation, cell adhesion, cell growth, cell survival, tissue regeneration, cell differentiation and cell migration. Inhibits mesoderm formation and promotes neural formation during development. Plays a role in development of the neuromuscular junction (NMJ). Has antibacterial activity against both Gram-positive and Gram-negative bacteria. This is Midkine-B (mdk-b) from Xenopus laevis (African clawed frog).